The primary structure comprises 88 residues: Large ribosomal subunit protein bL27 (88 aa).

Residues 1 to 13 (MATKKGASSSSNG) show a composition bias toward polar residues. The segment at 1–25 (MATKKGASSSSNGRDSEAKRLGVKR) is disordered.

It belongs to the bacterial ribosomal protein bL27 family.

This Corynebacterium efficiens (strain DSM 44549 / YS-314 / AJ 12310 / JCM 11189 / NBRC 100395) protein is Large ribosomal subunit protein bL27.